The following is a 335-amino-acid chain: Transcriptional activator NphR (335 aa).

Residues 231 to 329 (TRVQRVIEQN…GSSPGLYRKE (99 aa)) enclose the HTH araC/xylS-type domain. DNA-binding regions (H-T-H motif) lie at residues 249–270 (SDIAAAAGMSLRTVHKLFNAEG) and 296–319 (VADVSECAGFRDVSHFSRLFRSTF).

In terms of biological role, transcriptional activator of nphA1 and nphA2 involved in the degradation of 4-nitrophenol (4-NP). This Rhodococcus sp protein is Transcriptional activator NphR (nphR).